A 322-amino-acid polypeptide reads, in one-letter code: Tubulin alpha-4 chain (322 aa).

Serine 15, glycine 19, threonine 20, threonine 54, asparagine 81, and asparagine 103 together coordinate GTP. Glutamate 129 is an active-site residue.

This sequence belongs to the tubulin family. As to quaternary structure, dimer of alpha and beta chains. A typical microtubule is a hollow water-filled tube with an outer diameter of 25 nm and an inner diameter of 15 nM. Alpha-beta heterodimers associate head-to-tail to form protofilaments running lengthwise along the microtubule wall with the beta-tubulin subunit facing the microtubule plus end conferring a structural polarity. Microtubules usually have 13 protofilaments but different protofilament numbers can be found in some organisms and specialized cells. The cofactor is Mg(2+). In terms of processing, some glutamate residues at the C-terminus are polyglycylated, resulting in polyglycine chains on the gamma-carboxyl group. Glycylation is mainly limited to tubulin incorporated into axonemes (cilia and flagella) whereas glutamylation is prevalent in neuronal cells, centrioles, axonemes, and the mitotic spindle. Both modifications can coexist on the same protein on adjacent residues, and lowering polyglycylation levels increases polyglutamylation, and reciprocally. The precise function of polyglycylation is still unclear. Some glutamate residues at the C-terminus are polyglutamylated, resulting in polyglutamate chains on the gamma-carboxyl group. Polyglutamylation plays a key role in microtubule severing by spastin (SPAST). SPAST preferentially recognizes and acts on microtubules decorated with short polyglutamate tails: severing activity by SPAST increases as the number of glutamates per tubulin rises from one to eight, but decreases beyond this glutamylation threshold.

The protein resides in the cytoplasm. The protein localises to the cytoskeleton. The catalysed reaction is GTP + H2O = GDP + phosphate + H(+). In terms of biological role, tubulin is the major constituent of microtubules, a cylinder consisting of laterally associated linear protofilaments composed of alpha- and beta-tubulin heterodimers. Microtubules grow by the addition of GTP-tubulin dimers to the microtubule end, where a stabilizing cap forms. Below the cap, tubulin dimers are in GDP-bound state, owing to GTPase activity of alpha-tubulin. This is Tubulin alpha-4 chain from Gallus gallus (Chicken).